Reading from the N-terminus, the 500-residue chain is Catalase (500 aa).

Active-site residues include His-59 and Asn-131. Tyr-339 lines the heme pocket.

It belongs to the catalase family. Requires heme as cofactor.

It carries out the reaction 2 H2O2 = O2 + 2 H2O. Functionally, decomposes hydrogen peroxide into water and oxygen; serves to protect cells from the toxic effects of hydrogen peroxide. The sequence is that of Catalase (katA) from Neisseria gonorrhoeae.